The sequence spans 464 residues: Putative F-box/LRR-repeat protein At3g59160 (464 aa).

The 49-residue stretch at 12 to 60 (KDMINDLPDALLCHVLSYLTTKEAASTSLLSRRWRYLLAFVPNLEFDDS) folds into the F-box domain. LRR repeat units lie at residues 172–198 (TLKI…HLES), 200–225 (MFDE…VLHH), 233–258 (SCSV…GMHE), 336–367 (VLCL…TIQS), 368–393 (TPKV…VFQG), and 408–433 (KIEK…VLHY).

The protein is Putative F-box/LRR-repeat protein At3g59160 of Arabidopsis thaliana (Mouse-ear cress).